The sequence spans 283 residues: Zinc import ATP-binding protein ZnuC (283 aa).

The region spanning 13–228 (VEMRNAGVHR…PEYVRLFGAR (216 aa)) is the ABC transporter domain. 45 to 52 (GPNGSGKS) is a binding site for ATP. The segment at 264-283 (HHHDHARDGGQGGGGHGHAG) is disordered. Residues 272-283 (GGQGGGGHGHAG) are compositionally biased toward gly residues.

The protein belongs to the ABC transporter superfamily. Zinc importer (TC 3.A.1.15.5) family. The complex is composed of two ATP-binding proteins (ZnuC), two transmembrane proteins (ZnuB) and a solute-binding protein (ZnuA).

The protein resides in the cell inner membrane. The catalysed reaction is Zn(2+)(out) + ATP(in) + H2O(in) = Zn(2+)(in) + ADP(in) + phosphate(in) + H(+)(in). In terms of biological role, part of the ABC transporter complex ZnuABC involved in zinc import. Responsible for energy coupling to the transport system. This chain is Zinc import ATP-binding protein ZnuC, found in Chelativorans sp. (strain BNC1).